The following is a 380-amino-acid chain: Hydrogenase maturation factor HypD1 (380 aa).

Fe cation is bound by residues cysteine 36, cysteine 64, and cysteine 67.

This sequence belongs to the HypD family. [4Fe-4S] cluster is required as a cofactor.

It participates in protein modification; [NiFe] hydrogenase maturation. Involved in the maturation of [NiFe] hydrogenases. Involved in the biosynthesis of the Fe(CN)(2)CO cofactor. The polypeptide is Hydrogenase maturation factor HypD1 (hypD1) (Bradyrhizobium diazoefficiens (strain JCM 10833 / BCRC 13528 / IAM 13628 / NBRC 14792 / USDA 110)).